The following is a 627-amino-acid chain: Pheromone B alpha 2 receptor (627 aa).

The Extracellular portion of the chain corresponds to Met1–Pro7. The chain crosses the membrane as a helical span at residues Ala8–Leu28. Topologically, residues Gln29–Thr35 are cytoplasmic. Residues Cys36–Trp56 traverse the membrane as a helical segment. Residues Lys57–Glu69 lie on the Extracellular side of the membrane. A helical membrane pass occupies residues Ile70–Val90. Residues Arg91–Ala102 are Cytoplasmic-facing. Residues Val103 to Val123 traverse the membrane as a helical segment. At Val124 to Leu150 the chain is on the extracellular side. A helical membrane pass occupies residues Thr151–Ile171. At Gln172 to Arg197 the chain is on the cytoplasmic side. A helical membrane pass occupies residues Leu198–Ile218. Residues Leu219–Tyr260 are Extracellular-facing. The chain crosses the membrane as a helical span at residues Glu261–Ala281. Over Gln282–Val627 the chain is Cytoplasmic. Disordered stretches follow at residues Leu363–Ile405, Thr479–Ala505, and Leu518–Val627. Residues Ser372 to Ser387 are compositionally biased toward low complexity. Composition is skewed to polar residues over residues Pro519–Thr533 and Ser545–Met555. Low complexity predominate over residues Ala569–Ala607.

The protein belongs to the G-protein coupled receptor 4 family.

It localises to the cell membrane. Receptor for the BAP2 pheromone, a prenylated mating factor. The receptor/pheromone interaction may have a role in the fusion of clamp cells. This Schizophyllum commune (Split gill fungus) protein is Pheromone B alpha 2 receptor (BAR2).